We begin with the raw amino-acid sequence, 316 residues long: WEB family protein At3g13190 (316 aa).

Coiled coils occupy residues 42–90 (WNKE…MIND), 119–195 (EEES…AEEH), and 233–266 (RDETLKTLEMSEREIEDIKAATQDALKKAEMAQE). Residues 295-316 (STKEVLKSKPRSSSKEGCLVKC) form a disordered region.

It belongs to the WEB family.

This chain is WEB family protein At3g13190, found in Arabidopsis thaliana (Mouse-ear cress).